Consider the following 170-residue polypeptide: Peptide deformylase (170 aa).

Residues cysteine 93 and histidine 135 each coordinate Fe cation. Glutamate 136 is a catalytic residue. A Fe cation-binding site is contributed by histidine 139.

Belongs to the polypeptide deformylase family. Requires Fe(2+) as cofactor.

The catalysed reaction is N-terminal N-formyl-L-methionyl-[peptide] + H2O = N-terminal L-methionyl-[peptide] + formate. Its function is as follows. Removes the formyl group from the N-terminal Met of newly synthesized proteins. Requires at least a dipeptide for an efficient rate of reaction. N-terminal L-methionine is a prerequisite for activity but the enzyme has broad specificity at other positions. In Acidobacterium capsulatum (strain ATCC 51196 / DSM 11244 / BCRC 80197 / JCM 7670 / NBRC 15755 / NCIMB 13165 / 161), this protein is Peptide deformylase.